The primary structure comprises 460 residues: Probable carboxylesterase 11 (460 aa).

2 stretches are compositionally biased toward polar residues: residues 26-35 (QSSGDESSSD) and 132-145 (NSYGYTTGSSSPEA). 2 disordered regions span residues 26–52 (QSSGDESSSDPFGVTTRPEESVAAPNP) and 132–161 (NSYGYTTGSSSPEAGSSDVYRGYAPSSSGG). Residues 173–175 (HGG) carry the Involved in the stabilization of the negatively charged intermediate by the formation of the oxyanion hole motif. Active-site residues include Ser289, Asp392, and His422.

It belongs to the 'GDXG' lipolytic enzyme family. As to expression, expressed in roots, leaves, stems, flowers and siliques.

It carries out the reaction a carboxylic ester + H2O = an alcohol + a carboxylate + H(+). In terms of biological role, carboxylesterase acting on esters with varying acyl chain length. In Arabidopsis thaliana (Mouse-ear cress), this protein is Probable carboxylesterase 11 (CXE11).